An 857-amino-acid polypeptide reads, in one-letter code: Blue light receptor lreA (857 aa).

PAS domains lie at 306-328 (IIYV…VGQN), 479-542 (LVEN…TTTD), and 608-642 (LSKS…DLMD). A GATA-type zinc finger spans residues 811-836 (CAICQTKKTPEWRRGPSGERDLCNSC).

Its function is as follows. Transcription factor that acts as a blue light sensor. Plays crucial roles in fungal growth and asexual development. Involved in conidiophore formation, sclerotium production, and conidial stress tolerance. Promotes conidiation by inducing the expression of brlA and abaA. Positively regulates the fungal pathogenicity towards maize. In blue light conditions, inhibits aflatoxin B1 (AFB1) biosynthesis by down-regulating the expression of key genes such as aflA, aflJ, aflH, aflO and aflK. The protein is Blue light receptor lreA of Aspergillus flavus.